The chain runs to 765 residues: Probable dipeptidyl peptidase 4 (765 aa).

The first 14 residues, 1–14 (MKWSILLLVGCAAA), serve as a signal peptide directing secretion. N-linked (GlcNAc...) asparagine glycans are attached at residues asparagine 35, asparagine 78, asparagine 101, asparagine 110, asparagine 169, asparagine 218, asparagine 465, and asparagine 490. Residue serine 613 is the Charge relay system of the active site. Residue asparagine 665 is glycosylated (N-linked (GlcNAc...) asparagine). Active-site charge relay system residues include aspartate 690 and histidine 725.

This sequence belongs to the peptidase S9B family.

It is found in the secreted. It catalyses the reaction Release of an N-terminal dipeptide, Xaa-Yaa-|-Zaa-, from a polypeptide, preferentially when Yaa is Pro, provided Zaa is neither Pro nor hydroxyproline.. Its function is as follows. Extracellular dipeptidyl-peptidase which removes N-terminal dipeptides sequentially from polypeptides having unsubstituted N-termini provided that the penultimate residue is proline. Contributes to pathogenicity. The protein is Probable dipeptidyl peptidase 4 (dpp4) of Aspergillus fumigatus (strain CBS 144.89 / FGSC A1163 / CEA10) (Neosartorya fumigata).